Reading from the N-terminus, the 492-residue chain is Homoserine O-acetyltransferase (492 aa).

In terms of domain architecture, AB hydrolase-1 spans N47–L352. Residue S152 is the Nucleophile of the active site. R221 serves as a coordination point for substrate. Active-site residues include D315 and H348. D349 serves as a coordination point for substrate. CBS domains are found at residues M375–I431 and M440–I492.

Belongs to the AB hydrolase superfamily. MetX family. In terms of assembly, homodimer.

It is found in the cytoplasm. The enzyme catalyses L-homoserine + acetyl-CoA = O-acetyl-L-homoserine + CoA. It functions in the pathway amino-acid biosynthesis; L-methionine biosynthesis via de novo pathway; O-acetyl-L-homoserine from L-homoserine: step 1/1. Functionally, transfers an acetyl group from acetyl-CoA to L-homoserine, forming acetyl-L-homoserine. The sequence is that of Homoserine O-acetyltransferase from Methanococcus vannielii (strain ATCC 35089 / DSM 1224 / JCM 13029 / OCM 148 / SB).